The chain runs to 118 residues: UPF0382 membrane protein C1782.12c (118 aa).

The signal sequence occupies residues Met1–Gly18. At Ala19–Thr40 the chain is on the lumenal side. A helical membrane pass occupies residues Ala41–Tyr61. At Gly62–Thr67 the chain is on the cytoplasmic side. A helical membrane pass occupies residues Gly68–Leu88. The Lumenal portion of the chain corresponds to Pro89–Arg96. Residues Ile97–Leu117 form a helical membrane-spanning segment. Val118 is a topological domain (cytoplasmic).

This sequence belongs to the UPF0382 family.

Its subcellular location is the endoplasmic reticulum membrane. This chain is UPF0382 membrane protein C1782.12c, found in Schizosaccharomyces pombe (strain 972 / ATCC 24843) (Fission yeast).